Consider the following 346-residue polypeptide: MQLEKELSRRKIKELLLEILSIYTPSGEEERAKDFFEKVSKEFNLNLEISKSKSYFLGKGDILLASHIDTVPGFIQPKIEGEVIYGRGAVDAKGPLIAMLLATYILNEKGYKVQFAALADEEGKSKGARELANSGIRYNYIIIGEPSNTLDVIVEYRGVLHLDILCRGNSQHSSSSKENLIVDLSKKILEIYREPSNYENFSIVPTIIKSGDYINMTPSEGYLHLDIRYSIKNSKDEILALIHNEFKTCDIKIVEDIEPVKVDVNSNIVKAVMRGIIKQGYKPKLARKAGTSDMNILKNIAKEIVTYGPGNSTLEHTNNEKISIDEIFIALTTYINAIEELCLKKK.

His67 is a Zn(2+) binding site. Asp69 is a catalytic residue. Asp91 contributes to the Zn(2+) binding site. Glu121 serves as the catalytic Proton acceptor. Positions 122, 145, and 316 each coordinate Zn(2+).

It belongs to the peptidase M20A family. LysK subfamily. Requires Zn(2+) as cofactor. Co(2+) is required as a cofactor.

It is found in the cytoplasm. The catalysed reaction is [amino-group carrier protein]-C-terminal-gamma-(L-lysyl)-L-glutamate + H2O = [amino-group carrier protein]-C-terminal-L-glutamate + L-lysine. It carries out the reaction [amino-group carrier protein]-C-terminal-gamma-(L-ornithyl)-L-glutamate + H2O = [amino-group carrier protein]-C-terminal-L-glutamate + L-ornithine. Its pathway is amino-acid biosynthesis; L-lysine biosynthesis via AAA pathway; L-lysine from L-alpha-aminoadipate (Thermus route): step 5/5. It participates in amino-acid biosynthesis; L-arginine biosynthesis. Functionally, catalyzes the release of L-lysine from [LysW]-gamma-L-lysine and the release of L-ornithine from [LysW]-L-ornithine. In Sulfurisphaera tokodaii (strain DSM 16993 / JCM 10545 / NBRC 100140 / 7) (Sulfolobus tokodaii), this protein is [LysW]-lysine/[LysW]-ornithine hydrolase.